Reading from the N-terminus, the 204-residue chain is Large ribosomal subunit protein uL4 (204 aa).

Positions 49-75 are disordered; the sequence is TKGRSDVSGGGKKPWRQKGRGGARAGS.

Belongs to the universal ribosomal protein uL4 family. As to quaternary structure, part of the 50S ribosomal subunit.

One of the primary rRNA binding proteins, this protein initially binds near the 5'-end of the 23S rRNA. It is important during the early stages of 50S assembly. It makes multiple contacts with different domains of the 23S rRNA in the assembled 50S subunit and ribosome. In terms of biological role, forms part of the polypeptide exit tunnel. This is Large ribosomal subunit protein uL4 from Campylobacter jejuni (strain RM1221).